The primary structure comprises 485 residues: ATP synthase subunit beta 2 (485 aa).

The segment covering 1-10 (MSGMGEKSEQ) has biased composition (basic and acidic residues). A disordered region spans residues 1 to 27 (MSGMGEKSEQISKSARSTDPQEQESVA). The segment covering 11–24 (ISKSARSTDPQEQE) has biased composition (polar residues). Residue 177–184 (GGAGVGKT) coordinates ATP.

This sequence belongs to the ATPase alpha/beta chains family. F-type ATPases have 2 components, CF(1) - the catalytic core - and CF(0) - the membrane proton channel. CF(1) has five subunits: alpha(3), beta(3), gamma(1), delta(1), epsilon(1). CF(0) has three main subunits: a(1), b(2) and c(9-12). The alpha and beta chains form an alternating ring which encloses part of the gamma chain. CF(1) is attached to CF(0) by a central stalk formed by the gamma and epsilon chains, while a peripheral stalk is formed by the delta and b chains.

Its subcellular location is the cell inner membrane. The catalysed reaction is ATP + H2O + 4 H(+)(in) = ADP + phosphate + 5 H(+)(out). In terms of biological role, produces ATP from ADP in the presence of a proton gradient across the membrane. The catalytic sites are hosted primarily by the beta subunits. In Nitrosomonas eutropha (strain DSM 101675 / C91 / Nm57), this protein is ATP synthase subunit beta 2.